We begin with the raw amino-acid sequence, 111 residues long: Universal stress protein B (111 aa).

The next 2 helical transmembrane spans lie at methionine 1–arginine 21 and phenylalanine 90–tryptophan 110.

It belongs to the universal stress protein B family.

The protein resides in the cell inner membrane. The sequence is that of Universal stress protein B from Yersinia pseudotuberculosis serotype O:1b (strain IP 31758).